Reading from the N-terminus, the 213-residue chain is MASLFKKKTVDDVIKEQNRELRGTQRAIIRDRAALEKQEKQLELEIKKMAKIGNKEACRVLAKQLVHLRKQKTRTFAVSSKVTSMSTQTKVMNSQMKMAGAMSTTAKTMQAVNKKMDPQKTLQTMQNFQKENMKMEMTEEMINDTLDDIFDGSDDEEESQDIVNQVLDEIGIEISGKMAKAPSAARSLPSASTSKSTISDEEIERQLKALGVD.

Position 2 is an N-acetylalanine (alanine 2). Residues 25-55 (QRAIIRDRAALEKQEKQLELEIKKMAKIGNK) adopt a coiled-coil conformation. The tract at residues 178-202 (MAKAPSAARSLPSASTSKSTISDEE) is disordered. Low complexity predominate over residues 179-194 (AKAPSAARSLPSASTS). At serine 199 the chain carries Phosphoserine. The short motif at 201–211 (EEIERQLKALG) is the MIT-interacting motif element.

It belongs to the SNF7 family. Probable core component of the endosomal sorting required for transport complex III (ESCRT-III). ESCRT-III components are thought to multimerize to form a flat lattice on the perimeter membrane of the endosome. Several assembly forms of ESCRT-III may exist that interact and act sequentially. Interacts with CHMP2A. Interacts with VPS4A. Interacts with VPS4B; the interaction is direct.

The protein localises to the cytoplasm. It is found in the cytosol. It localises to the late endosome membrane. In terms of biological role, probable core component of the endosomal sorting required for transport complex III (ESCRT-III) which is involved in multivesicular bodies (MVBs) formation and sorting of endosomal cargo proteins into MVBs. MVBs contain intraluminal vesicles (ILVs) that are generated by invagination and scission from the limiting membrane of the endosome and mostly are delivered to lysosomes enabling degradation of membrane proteins, such as stimulated growth factor receptors, lysosomal enzymes and lipids. The MVB pathway appears to require the sequential function of ESCRT-O, -I,-II and -III complexes. ESCRT-III proteins mostly dissociate from the invaginating membrane before the ILV is released. The ESCRT machinery also functions in topologically equivalent membrane fission events, such as the terminal stages of cytokinesis and the budding of enveloped viruses (lentiviruses). ESCRT-III proteins are believed to mediate the necessary vesicle extrusion and/or membrane fission activities, possibly in conjunction with the AAA ATPase VPS4. In Bos taurus (Bovine), this protein is Charged multivesicular body protein 2b (CHMP2B).